The chain runs to 194 residues: NADH-quinone oxidoreductase subunit B (194 aa).

[4Fe-4S] cluster-binding residues include Cys-73, Cys-74, Cys-138, and Cys-168.

It belongs to the complex I 20 kDa subunit family. As to quaternary structure, NDH-1 is composed of 14 different subunits. Subunits NuoB, C, D, E, F, and G constitute the peripheral sector of the complex. [4Fe-4S] cluster serves as cofactor.

The protein localises to the cell inner membrane. It carries out the reaction a quinone + NADH + 5 H(+)(in) = a quinol + NAD(+) + 4 H(+)(out). In terms of biological role, NDH-1 shuttles electrons from NADH, via FMN and iron-sulfur (Fe-S) centers, to quinones in the respiratory chain. The immediate electron acceptor for the enzyme in this species is believed to be ubiquinone. Couples the redox reaction to proton translocation (for every two electrons transferred, four hydrogen ions are translocated across the cytoplasmic membrane), and thus conserves the redox energy in a proton gradient. The polypeptide is NADH-quinone oxidoreductase subunit B (Rhizobium johnstonii (strain DSM 114642 / LMG 32736 / 3841) (Rhizobium leguminosarum bv. viciae)).